We begin with the raw amino-acid sequence, 431 residues long: Lipoyl synthase 2, mitochondrial (431 aa).

The disordered stretch occupies residues 21–43 (SPLGKLQEERGEGVAKDPKKDKQ). Residues 26–40 (LQEERGEGVAKDPKK) are compositionally biased toward basic and acidic residues. [4Fe-4S] cluster-binding residues include C127, C132, C138, C159, C163, C166, and S375. Positions 142 to 364 (DEEEGTATAT…EEEAMAMGFL (223 aa)) constitute a Radical SAM core domain.

The protein belongs to the radical SAM superfamily. Lipoyl synthase family. [4Fe-4S] cluster is required as a cofactor.

Its subcellular location is the mitochondrion. It carries out the reaction [[Fe-S] cluster scaffold protein carrying a second [4Fe-4S](2+) cluster] + N(6)-octanoyl-L-lysyl-[protein] + 2 oxidized [2Fe-2S]-[ferredoxin] + 2 S-adenosyl-L-methionine + 4 H(+) = [[Fe-S] cluster scaffold protein] + N(6)-[(R)-dihydrolipoyl]-L-lysyl-[protein] + 4 Fe(3+) + 2 hydrogen sulfide + 2 5'-deoxyadenosine + 2 L-methionine + 2 reduced [2Fe-2S]-[ferredoxin]. The protein operates within protein modification; protein lipoylation via endogenous pathway; protein N(6)-(lipoyl)lysine from octanoyl-[acyl-carrier-protein]: step 2/2. Functionally, catalyzes the radical-mediated insertion of two sulfur atoms into the C-6 and C-8 positions of the octanoyl moiety bound to the lipoyl domains of lipoate-dependent enzymes, thereby converting the octanoylated domains into lipoylated derivatives. The sequence is that of Lipoyl synthase 2, mitochondrial from Trypanosoma cruzi (strain CL Brener).